The sequence spans 503 residues: Maturase K (503 aa).

Belongs to the intron maturase 2 family. MatK subfamily.

The protein resides in the plastid. The protein localises to the chloroplast. In terms of biological role, usually encoded in the trnK tRNA gene intron. Probably assists in splicing its own and other chloroplast group II introns. This Liquidambar formosana (Formosan gum) protein is Maturase K.